The following is an 89-amino-acid chain: Small ribosomal subunit protein uS15 (89 aa).

Belongs to the universal ribosomal protein uS15 family. Part of the 30S ribosomal subunit. Forms a bridge to the 50S subunit in the 70S ribosome, contacting the 23S rRNA.

Functionally, one of the primary rRNA binding proteins, it binds directly to 16S rRNA where it helps nucleate assembly of the platform of the 30S subunit by binding and bridging several RNA helices of the 16S rRNA. In terms of biological role, forms an intersubunit bridge (bridge B4) with the 23S rRNA of the 50S subunit in the ribosome. This Magnetococcus marinus (strain ATCC BAA-1437 / JCM 17883 / MC-1) protein is Small ribosomal subunit protein uS15.